The following is a 93-amino-acid chain: U12-lycotoxin-Ls1e (93 aa).

An N-terminal signal peptide occupies residues 1 to 18; that stretch reads MKFAVILLFTLVVLAVAS. Positions 19 to 38 are excised as a propeptide; it reads ESVEEDTREIDVEEFQEQQR.

Belongs to the neurotoxin 31 family. Post-translationally, contains 5 disulfide bonds. Expressed by the venom gland.

It is found in the secreted. This is U12-lycotoxin-Ls1e from Lycosa singoriensis (Wolf spider).